Here is a 338-residue protein sequence, read N- to C-terminus: Putative transport protein TM_1349 (338 aa).

7 consecutive transmembrane segments (helical) span residues 20 to 40, 68 to 88, 147 to 167, 203 to 223, 239 to 259, 263 to 283, and 297 to 317; these read ILIS…IVLM, ALLL…PPVF, VSVT…VFYI, VIFI…EAFN, FIPI…SLTL, GVLL…VVFI, and IILS…FVGV.

The protein belongs to the autoinducer-2 exporter (AI-2E) (TC 2.A.86) family.

It localises to the cell membrane. The polypeptide is Putative transport protein TM_1349 (Thermotoga maritima (strain ATCC 43589 / DSM 3109 / JCM 10099 / NBRC 100826 / MSB8)).